Here is a 165-residue protein sequence, read N- to C-terminus: Shikimate kinase (165 aa).

12–17 (GCGKST) contacts ATP. S16 is a Mg(2+) binding site. Substrate is bound by residues D34, R57, and G79. R116 contacts ATP. Substrate is bound at residue R133.

This sequence belongs to the shikimate kinase family. Monomer. It depends on Mg(2+) as a cofactor.

The protein resides in the cytoplasm. It catalyses the reaction shikimate + ATP = 3-phosphoshikimate + ADP + H(+). The protein operates within metabolic intermediate biosynthesis; chorismate biosynthesis; chorismate from D-erythrose 4-phosphate and phosphoenolpyruvate: step 5/7. Its function is as follows. Catalyzes the specific phosphorylation of the 3-hydroxyl group of shikimic acid using ATP as a cosubstrate. The sequence is that of Shikimate kinase from Clostridium botulinum (strain Eklund 17B / Type B).